The primary structure comprises 96 residues: Large ribosomal subunit protein bL21 (96 aa).

Positions 73-84 are enriched in basic residues; that stretch reads KRRKRYQSRNGH. The interval 73 to 96 is disordered; that stretch reads KRRKRYQSRNGHRQQMTQIEVVSL. Positions 85 to 96 are enriched in polar residues; it reads RQQMTQIEVVSL.

This sequence belongs to the bacterial ribosomal protein bL21 family. As to quaternary structure, part of the 50S ribosomal subunit. Contacts protein L20.

This protein binds to 23S rRNA in the presence of protein L20. The polypeptide is Large ribosomal subunit protein bL21 (Chlorobium luteolum (strain DSM 273 / BCRC 81028 / 2530) (Pelodictyon luteolum)).